The following is a 50-amino-acid chain: uncharacterized protein (50 aa).

This is an uncharacterized protein from Dictyostelium discoideum (Social amoeba).